We begin with the raw amino-acid sequence, 604 residues long: Protein TAX4 (604 aa).

5 disordered regions span residues 38-77, 133-249, 267-300, 338-380, and 394-428; these read HPNG…PRSI, FSNR…RQQE, GTLP…QENL, DETF…KGLK, and PFPH…NEDK. The segment covering 176 to 185 has biased composition (polar residues); that stretch reads YDNNVRSRSI. 2 stretches are compositionally biased toward low complexity: residues 186 to 203 and 224 to 240; these read SPQV…SISS and SMSS…KASL. 3 stretches are compositionally biased toward basic residues: residues 276–290, 366–379, and 396–421; these read SQRK…HKLL, KKKK…KKGL, and PHHH…HTSS. Residues 469–559 form the EH domain; that stretch reads ANEDDESHLQ…RVWNSVDGYV (91 aa).

Belongs to the IRS4 family. As to quaternary structure, interacts with INP51.

Its function is as follows. With IRS4, acts as a positive regulator of INP51 activity and phosphatidylinositol 4,5-bisphosphate turnover. Negatively regulates signaling through the cell integrity pathway, including the MAP kinase SLT2. This chain is Protein TAX4 (TAX4), found in Saccharomyces cerevisiae (strain YJM789) (Baker's yeast).